The sequence spans 355 residues: Probable butyrate kinase (355 aa).

The protein belongs to the acetokinase family.

Its subcellular location is the cytoplasm. The enzyme catalyses butanoate + ATP = butanoyl phosphate + ADP. This chain is Probable butyrate kinase, found in Listeria welshimeri serovar 6b (strain ATCC 35897 / DSM 20650 / CCUG 15529 / CIP 8149 / NCTC 11857 / SLCC 5334 / V8).